Reading from the N-terminus, the 166-residue chain is Protein adg1 (166 aa).

The signal sequence occupies residues 1–22 (MFLRSIFQTLCAVSFLAGSVFA).

The protein localises to the endoplasmic reticulum. This Schizosaccharomyces pombe (strain 972 / ATCC 24843) (Fission yeast) protein is Protein adg1 (adg1).